We begin with the raw amino-acid sequence, 332 residues long: MAAVFLVTLYEYSPLFYIAVVFTCFIATTGLVLGWLGWDVPVILRNSEETQFSTRAFKKQMRQVKNPFGLEITNSSAASLATGVTLTTDCLEDSRLTCYWGCSVQKLYEALQKHVYCFRISTPQALEEALYSDYLHREQYFIKKHSKEEIYCQLPSSTGVEDFGPVPRSRYPLVALLTLADEDDREIYDIISMVSVIHIPDKTYKLPCRILYQYLILAQGQFYDLKQLFMSANNSATPSRDQSPADGSVEHSLLEKAGLAGAEVDPVEESSKDCVVCQNGGVNWVLLPCRHACLCDSCVCYFKQCPMCRQFVQESFALCGQKEADKDILETS.

The RING-type zinc-finger motif lies at 274–309 (CVVCQNGGVNWVLLPCRHACLCDSCVCYFKQCPMCR).

As to expression, highly expressed in testis, lower levels of expression is seen in skeletal muscle, liver, lung and brain.

The protein resides in the nucleus. The protein localises to the endoplasmic reticulum. Its function is as follows. Able to inhibit growth in several cell lines. This Rattus norvegicus (Rat) protein is Cell growth regulator with RING finger domain protein 1 (Cgrrf1).